The following is a 266-amino-acid chain: UPF0328 protein ECU05_1610/ECU11_0120 (266 aa).

The protein belongs to the UPF0328 family.

The sequence is that of UPF0328 protein ECU05_1610/ECU11_0120 from Encephalitozoon cuniculi (strain GB-M1) (Microsporidian parasite).